The chain runs to 161 residues: MLRLPEAHRDLFKKPFGTLYTSVDELLPRLEGRAVYAVGDVVTHNLLAAGVVPDIAIIDGYTMRTPCNRSPLLRARRLTVKNPPGTITGELTDAIDEAVRGQPAVIFVDGEEDLAVIPLVLAAPDGAAVLYGQPAEGVVLRLVDTAAKQEAASMLSIFVRE.

Residues aspartate 40, valine 41, valine 42, aspartate 59, and glutamate 112 each coordinate GTP.

It belongs to the GTP-dependent DPCK family.

It carries out the reaction 3'-dephospho-CoA + GTP = GDP + CoA + H(+). The protein operates within cofactor biosynthesis; coenzyme A biosynthesis. In terms of biological role, catalyzes the GTP-dependent phosphorylation of the 3'-hydroxyl group of dephosphocoenzyme A to form coenzyme A (CoA). This chain is GTP-dependent dephospho-CoA kinase, found in Methanoculleus marisnigri (strain ATCC 35101 / DSM 1498 / JR1).